A 224-amino-acid chain; its full sequence is Urease accessory protein UreF (224 aa).

It belongs to the UreF family. UreD, UreF and UreG form a complex that acts as a GTP-hydrolysis-dependent molecular chaperone, activating the urease apoprotein by helping to assemble the nickel containing metallocenter of UreC. The UreE protein probably delivers the nickel.

The protein localises to the cytoplasm. In terms of biological role, required for maturation of urease via the functional incorporation of the urease nickel metallocenter. The chain is Urease accessory protein UreF from Enterobacter sp. (strain 638).